We begin with the raw amino-acid sequence, 201 residues long: Increased recombination centers protein 21 (201 aa).

The 79-residue stretch at 122–200 (PLRINRKIVK…LQVCFIGVVC (79 aa)) folds into the Cytochrome b5 heme-binding domain. The heme site is built by histidine 158 and histidine 182.

The protein belongs to the cytochrome b5 family.

Functionally, involved in resistance to carboplatin and cisplatin. Is probably involved in a pathway contributing to genomic integrity. The polypeptide is Increased recombination centers protein 21 (IRC21) (Saccharomyces cerevisiae (strain ATCC 204508 / S288c) (Baker's yeast)).